We begin with the raw amino-acid sequence, 71 residues long: Small ribosomal subunit protein bS18 (71 aa).

This sequence belongs to the bacterial ribosomal protein bS18 family. In terms of assembly, part of the 30S ribosomal subunit. Forms a tight heterodimer with protein bS6.

Functionally, binds as a heterodimer with protein bS6 to the central domain of the 16S rRNA, where it helps stabilize the platform of the 30S subunit. This is Small ribosomal subunit protein bS18 from Nostoc sp. (strain PCC 7120 / SAG 25.82 / UTEX 2576).